The chain runs to 128 residues: MVLHGQISGIEIPATDVERAAKFYSDTFGWKFQAPANGTIPASKMQTFTAPGDIFPDEGVVSKVEEIPKSGAKFYINVDDLKATIEAVTKNGGKQLSDVISLGPHVPPFQFFHDTEGNTHAICTRPGK.

In terms of domain architecture, VOC spans 6–125 (QISGIEIPAT…EGNTHAICTR (120 aa)).

It participates in mycotoxin biosynthesis. In terms of biological role, glyoxylase-like domain-containing protein; part of the gene cluster that mediates the biosynthesis of the selective antifungal agent ascochitine, an o-quinone methide that plays a possible protective role against other microbial competitors in nature and is considered to be important for pathogenicity of legume-associated Didymella species. The pathway probably begins with the synthesis of a keto-aldehyde intermediate by the ascochitine non-reducing polyketide synthase pksAC from successive condensations of 4 malonyl-CoA units, presumably with a simple acetyl-CoA starter unit. Release of the keto-aldehyde intermediate is consistent with the presence of the C-terminal reductive release domain. The HR-PKS (orf7) probably makes a diketide starter unit which is passed to the non-reducing polyketide synthase pksAC for further extension, producing ascochital and ascochitine. The aldehyde dehydrogenase (orf1), the 2-oxoglutarate-dependent dioxygenase (orf3) and the dehydrogenase (orf9) are probably involved in subsequent oxidations of methyl groups to the carboxylic acid of the heterocyclic ring. The ascochitine gene cluster also includes a gene encoding a short peptide with a cupin domain (orf2) that is often found in secondary metabolite gene clusters and which function has still to be determined. The sequence is that of Glyoxylase-like domain-containing protein from Didymella fabae (Leaf and pod spot disease fungus).